We begin with the raw amino-acid sequence, 672 residues long: ATP-dependent zinc metalloprotease FtsH 1 (672 aa).

The segment at 1-22 (MKKDSESNSSDKSNKEELSTGR) is disordered. At 1–23 (MKKDSESNSSDKSNKEELSTGRR) the chain is on the cytoplasmic side. Residues 24–44 (GGNPMIIALVITVLAAMLFFN) traverse the membrane as a helical segment. Residues 45-141 (QPEPSSLISA…KFSPPDNTAA (97 aa)) are Periplasmic-facing. Residues 142-162 (ILNLLILVGLPLAIFFFIFMM) traverse the membrane as a helical segment. Topologically, residues 163–672 (IRRTRNDMMG…TSNASARRED (510 aa)) are cytoplasmic. 237-244 (GPPGTGKT) lines the ATP pocket. H458 is a binding site for Zn(2+). E459 is an active-site residue. H462 and D534 together coordinate Zn(2+). The tract at residues 642-672 (RLGDEEGKVEQIMAPEGAAERTSNASARRED) is disordered. The segment covering 662-672 (RTSNASARRED) has biased composition (polar residues).

The protein in the central section; belongs to the AAA ATPase family. In the C-terminal section; belongs to the peptidase M41 family. Homohexamer. Zn(2+) is required as a cofactor.

The protein resides in the cell inner membrane. Functionally, acts as a processive, ATP-dependent zinc metallopeptidase for both cytoplasmic and membrane proteins. Plays a role in the quality control of integral membrane proteins. This Rhodopirellula baltica (strain DSM 10527 / NCIMB 13988 / SH1) protein is ATP-dependent zinc metalloprotease FtsH 1.